Here is a 427-residue protein sequence, read N- to C-terminus: Adenylosuccinate synthetase (427 aa).

Residues 12–18 (GDEGKGK) and 40–42 (GHT) each bind GTP. Asp-13 acts as the Proton acceptor in catalysis. Asp-13 and Gly-40 together coordinate Mg(2+). Residues 13 to 16 (DEGK), 38 to 41 (NAGH), Thr-128, Arg-142, Gln-223, Thr-238, and Arg-302 each bind IMP. The active-site Proton donor is His-41. 298–304 (TTTGRPR) provides a ligand contact to substrate. Residues Arg-304, 330–332 (SID), and 412–414 (SVG) each bind GTP.

It belongs to the adenylosuccinate synthetase family. Homodimer. The cofactor is Mg(2+).

Its subcellular location is the cytoplasm. The enzyme catalyses IMP + L-aspartate + GTP = N(6)-(1,2-dicarboxyethyl)-AMP + GDP + phosphate + 2 H(+). It functions in the pathway purine metabolism; AMP biosynthesis via de novo pathway; AMP from IMP: step 1/2. Its function is as follows. Plays an important role in the de novo pathway of purine nucleotide biosynthesis. Catalyzes the first committed step in the biosynthesis of AMP from IMP. This is Adenylosuccinate synthetase from Staphylococcus aureus (strain MW2).